The sequence spans 182 residues: tRNA-splicing endonuclease (182 aa).

Active-site residues include Tyr-119, His-127, and Lys-158.

The protein belongs to the tRNA-intron endonuclease family. Archaeal short subfamily. Homotetramer; although the tetramer contains four active sites, only two participate in the cleavage. Therefore, it should be considered as a dimer of dimers.

It carries out the reaction pretRNA = a 3'-half-tRNA molecule with a 5'-OH end + a 5'-half-tRNA molecule with a 2',3'-cyclic phosphate end + an intron with a 2',3'-cyclic phosphate and a 5'-hydroxyl terminus.. Endonuclease that removes tRNA introns. Cleaves pre-tRNA at the 5'- and 3'-splice sites to release the intron. The products are an intron and two tRNA half-molecules bearing 2',3' cyclic phosphate and 5'-OH termini. Recognizes a pseudosymmetric substrate in which 2 bulged loops of 3 bases are separated by a stem of 4 bp. This is tRNA-splicing endonuclease from Saccharolobus islandicus (strain M.14.25 / Kamchatka #1) (Sulfolobus islandicus).